Consider the following 428-residue polypeptide: MNCVKINPCCLKGDIKIPPSKSLGHRAIICAALSEEESTIENISYSKDIKATCIGMSKLGALIIEDAKDNSTLKIKKQKLVSKEKVYIDCSESGSTVRFLIPISLIEERNVVFDGQGKLSYRPLDSYFNIFDEKEIAYSHPEGKVLPLQIKGRLKAGMFNLPGNISSQFISGLMFSLPFLEGDSIINITTNLESVGYVDMTIDMLKKFGIEIENKAYKSFFIKGNQKCKGTKYKVEGDFSQAAFWLSAGILNGNINCKDLNISSLQGDKVILDILKKMGGAIDEKSFSSKKSHTHGIVIDASQCPDLVPILSVVAALSEGTTKIVNAARLRIKESDRLKAMATELNKLGAEVVELEDGLLIEGKEKLKGGEVESWNDHRIAMALGIAALRCEESVTINGSECVSKSYPQFWSDLKQLGGDVHEWSLGE.

Residues lysine 21, serine 22, and arginine 26 each coordinate 3-phosphoshikimate. Lysine 21 is a phosphoenolpyruvate binding site. Phosphoenolpyruvate-binding residues include glycine 94 and arginine 122. Residues serine 166, serine 167, glutamine 168, serine 194, aspartate 306, and lysine 333 each coordinate 3-phosphoshikimate. Glutamine 168 contributes to the phosphoenolpyruvate binding site. Aspartate 306 (proton acceptor) is an active-site residue. 3 residues coordinate phosphoenolpyruvate: arginine 337, arginine 379, and lysine 405.

Belongs to the EPSP synthase family. As to quaternary structure, monomer.

It localises to the cytoplasm. It catalyses the reaction 3-phosphoshikimate + phosphoenolpyruvate = 5-O-(1-carboxyvinyl)-3-phosphoshikimate + phosphate. It participates in metabolic intermediate biosynthesis; chorismate biosynthesis; chorismate from D-erythrose 4-phosphate and phosphoenolpyruvate: step 6/7. Functionally, catalyzes the transfer of the enolpyruvyl moiety of phosphoenolpyruvate (PEP) to the 5-hydroxyl of shikimate-3-phosphate (S3P) to produce enolpyruvyl shikimate-3-phosphate and inorganic phosphate. This chain is 3-phosphoshikimate 1-carboxyvinyltransferase, found in Clostridium acetobutylicum (strain ATCC 824 / DSM 792 / JCM 1419 / IAM 19013 / LMG 5710 / NBRC 13948 / NRRL B-527 / VKM B-1787 / 2291 / W).